A 206-amino-acid chain; its full sequence is 2,3-bisphosphoglycerate-dependent phosphoglycerate mutase (206 aa).

Substrate is bound by residues 9–16, 22–23, R61, 88–91, K99, 115–116, and 159–160; these read RHGQSEWN, TG, ERDY, RR, and GN. H10 (tele-phosphohistidine intermediate) is an active-site residue. E88 acts as the Proton donor/acceptor in catalysis.

Belongs to the phosphoglycerate mutase family. BPG-dependent PGAM subfamily. Homodimer.

It carries out the reaction (2R)-2-phosphoglycerate = (2R)-3-phosphoglycerate. Its pathway is carbohydrate degradation; glycolysis; pyruvate from D-glyceraldehyde 3-phosphate: step 3/5. Functionally, catalyzes the interconversion of 2-phosphoglycerate and 3-phosphoglycerate. This Chelativorans sp. (strain BNC1) protein is 2,3-bisphosphoglycerate-dependent phosphoglycerate mutase.